We begin with the raw amino-acid sequence, 380 residues long: Queuine tRNA-ribosyltransferase (380 aa).

Residue Asp96 is the Proton acceptor of the active site. Substrate-binding positions include 96-100 (DSGGF), Asp150, Gln193, and Gly220. Residues 251 to 257 (GVGAPDS) form an RNA binding region. Residue Asp270 is the Nucleophile of the active site. The interval 275 to 279 (TRIAR) is RNA binding; important for wobble base 34 recognition. Cys308, Cys310, Cys313, and His339 together coordinate Zn(2+).

It belongs to the queuine tRNA-ribosyltransferase family. Homodimer. Within each dimer, one monomer is responsible for RNA recognition and catalysis, while the other monomer binds to the replacement base PreQ1. Zn(2+) is required as a cofactor.

It catalyses the reaction 7-aminomethyl-7-carbaguanine + guanosine(34) in tRNA = 7-aminomethyl-7-carbaguanosine(34) in tRNA + guanine. It functions in the pathway tRNA modification; tRNA-queuosine biosynthesis. In terms of biological role, catalyzes the base-exchange of a guanine (G) residue with the queuine precursor 7-aminomethyl-7-deazaguanine (PreQ1) at position 34 (anticodon wobble position) in tRNAs with GU(N) anticodons (tRNA-Asp, -Asn, -His and -Tyr). Catalysis occurs through a double-displacement mechanism. The nucleophile active site attacks the C1' of nucleotide 34 to detach the guanine base from the RNA, forming a covalent enzyme-RNA intermediate. The proton acceptor active site deprotonates the incoming PreQ1, allowing a nucleophilic attack on the C1' of the ribose to form the product. After dissociation, two additional enzymatic reactions on the tRNA convert PreQ1 to queuine (Q), resulting in the hypermodified nucleoside queuosine (7-(((4,5-cis-dihydroxy-2-cyclopenten-1-yl)amino)methyl)-7-deazaguanosine). This is Queuine tRNA-ribosyltransferase from Streptococcus uberis (strain ATCC BAA-854 / 0140J).